Consider the following 1382-residue polypeptide: Insulin receptor (1382 aa).

The first 27 residues, 1 to 27, serve as a signal peptide directing secretion; that stretch reads MATGGRRGAAAAPLLVAVAALLLGAAG. Extracellular-facing segments span residues 28-758 and 763-956; these read HLYP…PRPS and SLGD…NIAK. A disulfide bond links cysteine 35 and cysteine 53. Residues asparagine 43, asparagine 52, asparagine 105, and asparagine 138 are each glycosylated (N-linked (GlcNAc...) asparagine). 9 disulfides stabilise this stretch: cysteine 153–cysteine 182, cysteine 186–cysteine 209, cysteine 196–cysteine 215, cysteine 219–cysteine 228, cysteine 223–cysteine 234, cysteine 235–cysteine 243, cysteine 239–cysteine 252, cysteine 255–cysteine 264, and cysteine 268–cysteine 280. N-linked (GlcNAc...) asparagine glycosylation occurs at asparagine 242. Asparagine 282 carries an N-linked (GlcNAc...) asparagine glycan. 5 disulfides stabilise this stretch: cysteine 286/cysteine 311, cysteine 293/cysteine 301, cysteine 315/cysteine 328, cysteine 331/cysteine 335, and cysteine 339/cysteine 360. The N-linked (GlcNAc...) asparagine glycan is linked to asparagine 322. Asparagine 364 carries N-linked (GlcNAc...) asparagine glycosylation. Serine 400 is modified (phosphoserine). Tyrosine 401 is modified (phosphotyrosine). Serine 407 is modified (phosphoserine). Residues asparagine 424 and asparagine 445 are each glycosylated (N-linked (GlcNAc...) asparagine). A disulfide bridge links cysteine 462 with cysteine 495. Asparagine 541, asparagine 633, asparagine 651, and asparagine 698 each carry an N-linked (GlcNAc...) asparagine glycan. Residues 624–726 form the Fibronectin type-III 1 domain; that stretch reads VPLDPISVSN…SQILKELEES (103 aa). 2 disulfides stabilise this stretch: cysteine 674/cysteine 899 and cysteine 825/cysteine 834. Residues 686–708 form a disordered region; sequence SPPFESEDSQKHNQSEYEDSAGE. Residues 733–741 are insulin-binding; that stretch reads EDYLHNVVF. Residues 746–766 are disordered; it reads TSSGTGAEDPRPSRKRRSLGD. 2 Fibronectin type-III domains span residues 757-842 and 853-947; these read PSRK…YVSA and IVGP…VTDY. 2 N-linked (GlcNAc...) asparagine glycosylation sites follow: asparagine 769 and asparagine 782. Asparagine 920 and asparagine 933 each carry an N-linked (GlcNAc...) asparagine glycan. The chain crosses the membrane as a helical span at residues 957 to 979; the sequence is IIIGPLIFVFLFSVVIGSIYLFL. Residues 980–1382 lie on the Cytoplasmic side of the membrane; the sequence is RKRQPDGPLG…ILTLPRSNPS (403 aa). Tyrosine 992, tyrosine 999, and tyrosine 1011 each carry phosphotyrosine; by autocatalysis. A region of interest (important for interaction with IRS1, SHC1 and STAT5B) is located at residue tyrosine 999. In terms of domain architecture, Protein kinase spans 1023–1298; that stretch reads ITLLRELGQG…LLKDDLHPSF (276 aa). The ATP site is built by serine 1033 and lysine 1057. Residue lysine 1079 forms a Glycyl lysine isopeptide (Lys-Gly) (interchain with G-Cter in ubiquitin) linkage. Cysteine 1083 bears the S-nitrosocysteine mark. Position 1104-1110 (1104-1110) interacts with ATP; it reads ELMAHGD. Aspartate 1159 serves as the catalytic Proton donor/acceptor. ATP contacts are provided by residues 1163 to 1164 and aspartate 1177; that span reads RN. Tyrosine 1185, tyrosine 1189, tyrosine 1190, tyrosine 1355, and tyrosine 1361 each carry phosphotyrosine; by autocatalysis. A disordered region spans residues 1360 to 1382; the sequence is PYTHMNGGKKNGRILTLPRSNPS. The PIK3R1-binding stretch occupies residues 1361-1364; the sequence is YTHM.

It belongs to the protein kinase superfamily. Tyr protein kinase family. Insulin receptor subfamily. Tetramer of 2 alpha and 2 beta chains linked by disulfide bonds. The alpha chains carry the insulin-binding regions, while the beta chains carry the kinase domain. Forms a hybrid receptor with IGF1R, the hybrid is a tetramer consisting of 1 alpha chain and 1 beta chain of INSR and 1 alpha chain and 1 beta chain of IGF1R. Interacts with SORBS1 but dissociates from it following insulin stimulation. Binds SH2B2. Activated form of INSR interacts (via Tyr-999) with the PTB/PID domains of IRS1 and SHC1. The sequences surrounding the phosphorylated NPXY motif contribute differentially to either IRS1 or SHC1 recognition. Interacts (via tyrosines in the C-terminus) with IRS2 (via PTB domain and 591-786 AA); the 591-786 would be the primary anchor of IRS2 to INSR while the PTB domain would have a stabilizing action on the interaction with INSR. Interacts with the SH2 domains of the 85 kDa regulatory subunit of PI3K (PIK3R1) in vitro, when autophosphorylated on tyrosine residues. Interacts with SOCS7. Interacts (via the phosphorylated Tyr-999), with SOCS3. Interacts (via the phosphorylated Tyr-1185, Tyr-1189, Tyr-1190) with SOCS1. Interacts with CAV2 (tyrosine-phosphorylated form); the interaction is increased with 'Tyr-27'phosphorylation of CAV2. Interacts with ARRB2. Interacts with GRB10; this interaction blocks the association between IRS1/IRS2 and INSR, significantly reduces insulin-stimulated tyrosine phosphorylation of IRS1 and IRS2 and thus decreases insulin signaling. Interacts with GRB7. Interacts with PDPK1. Interacts (via Tyr-1190) with GRB14 (via BPS domain); this interaction protects the tyrosines in the activation loop from dephosphorylation, but promotes dephosphorylation of Tyr-999, this results in decreased interaction with, and phosphorylation of, IRS1. Interacts (via subunit alpha) with ENPP1 (via 485-599 AA); this interaction blocks autophosphorylation. Interacts with PTPRE; this interaction is dependent of Tyr-1185, Tyr-1189 and Tyr-1190 of the INSR. Interacts with STAT5B (via SH2 domain). Interacts with PTPRF. Interacts with ATIC; ATIC together with PRKAA2/AMPK2 and HACD3/PTPLAD1 is proposed to be part of a signaling netwok regulating INSR autophosphorylation and endocytosis. Interacts with the cone snail venom insulin Con-Ins G1. Interacts with the insulin receptor SORL1; this interaction strongly increases its surface exposure, hence strengthens insulin signal reception. Interacts (tyrosine phosphorylated) with CCDC88A/GIV (via SH2-like region); binding requires autophosphorylation of the INSR C-terminal region. Interacts with GNAI3; the interaction is probably mediated by CCDC88A/GIV. Interacts with LMBRD1. Interacts (in response to insulin stimulation) with NCK1; this interaction may recruit PTPN1 to mediate INSR dephosphorylation. Interacts with CD248; this interaction diminishes INSR autophosphorylation. Post-translationally, after being transported from the endoplasmic reticulum to the Golgi apparatus, the single glycosylated precursor is further glycosylated and then cleaved, followed by its transport to the plasma membrane. Autophosphorylated on tyrosine residues in response to insulin. Phosphorylation of Tyr-999 is required for binding to IRS1, SHC1 and STAT5B. Dephosphorylated by PTPRE at Tyr-999, Tyr-1185, Tyr-1189 and Tyr-1190. May also be phosphorylated at Tyr-1185 and Tyr-1190 by mTORC2. Dephosphorylated by PTPRF and PTPN1. Dephosphorylated by PTPN2; down-regulates insulin-induced signaling. Dephosphorylation at Tyr-1189 and Tyr-1190 requires the SH2/SH3 adapter protein NCK1, probably to recruit its interaction partner PTPN1. In terms of processing, S-nitrosylation at Cys-1083 by BLVRB inhibits the receptor tyrosine kinase, thereby inhibiting insulin signaling. Post-translationally, ubiquitinated by MARCHF1; leading to degradation thereby reducing surface INSR expression. In terms of tissue distribution, isoform Long and isoform Short are predominantly expressed in tissue targets of insulin metabolic effects: liver, adipose tissue and skeletal muscle but are also expressed in the peripheral nerve, kidney, pulmonary alveoli, pancreatic acini, placenta vascular endothelium, fibroblasts, monocytes, granulocytes, erythrocytes and skin. Isoform Short is preferentially expressed in fetal cells such as fetal fibroblasts, muscle, liver and kidney. Found as a hybrid receptor with IGF1R in muscle, heart, kidney, adipose tissue, skeletal muscle, hepatoma, fibroblasts, spleen and placenta (at protein level). Overexpressed in several tumors, including breast, colon, lung, ovary, and thyroid carcinomas.

It is found in the cell membrane. It localises to the late endosome. The protein resides in the lysosome. It carries out the reaction L-tyrosyl-[protein] + ATP = O-phospho-L-tyrosyl-[protein] + ADP + H(+). Its activity is regulated as follows. Activated in response to insulin. Autophosphorylation activates the kinase activity. PTPN1, PTPRE and PTPRF dephosphorylate important tyrosine residues, thereby reducing INSR activity. Inhibited by ENPP1. GRB10 and GRB14 inhibit the catalytic activity of the INSR, they block access of substrates to the activated receptor. SOCS1 and SOCS3 act as negative regulators of INSR activity, they bind to the activated INRS and interfere with the phosphorylation of INSR substrates. In terms of biological role, receptor tyrosine kinase which mediates the pleiotropic actions of insulin. Binding of insulin leads to phosphorylation of several intracellular substrates, including, insulin receptor substrates (IRS1, 2, 3, 4), SHC, GAB1, CBL and other signaling intermediates. Each of these phosphorylated proteins serve as docking proteins for other signaling proteins that contain Src-homology-2 domains (SH2 domain) that specifically recognize different phosphotyrosine residues, including the p85 regulatory subunit of PI3K and SHP2. Phosphorylation of IRSs proteins lead to the activation of two main signaling pathways: the PI3K-AKT/PKB pathway, which is responsible for most of the metabolic actions of insulin, and the Ras-MAPK pathway, which regulates expression of some genes and cooperates with the PI3K pathway to control cell growth and differentiation. Binding of the SH2 domains of PI3K to phosphotyrosines on IRS1 leads to the activation of PI3K and the generation of phosphatidylinositol-(3, 4, 5)-triphosphate (PIP3), a lipid second messenger, which activates several PIP3-dependent serine/threonine kinases, such as PDPK1 and subsequently AKT/PKB. The net effect of this pathway is to produce a translocation of the glucose transporter SLC2A4/GLUT4 from cytoplasmic vesicles to the cell membrane to facilitate glucose transport. Moreover, upon insulin stimulation, activated AKT/PKB is responsible for: anti-apoptotic effect of insulin by inducing phosphorylation of BAD; regulates the expression of gluconeogenic and lipogenic enzymes by controlling the activity of the winged helix or forkhead (FOX) class of transcription factors. Another pathway regulated by PI3K-AKT/PKB activation is mTORC1 signaling pathway which regulates cell growth and metabolism and integrates signals from insulin. AKT mediates insulin-stimulated protein synthesis by phosphorylating TSC2 thereby activating mTORC1 pathway. The Ras/RAF/MAP2K/MAPK pathway is mainly involved in mediating cell growth, survival and cellular differentiation of insulin. Phosphorylated IRS1 recruits GRB2/SOS complex, which triggers the activation of the Ras/RAF/MAP2K/MAPK pathway. In addition to binding insulin, the insulin receptor can bind insulin-like growth factors (IGFI and IGFII). Isoform Short has a higher affinity for IGFII binding. When present in a hybrid receptor with IGF1R, binds IGF1. PubMed:12138094 shows that hybrid receptors composed of IGF1R and INSR isoform Long are activated with a high affinity by IGF1, with low affinity by IGF2 and not significantly activated by insulin, and that hybrid receptors composed of IGF1R and INSR isoform Short are activated by IGF1, IGF2 and insulin. In contrast, PubMed:16831875 shows that hybrid receptors composed of IGF1R and INSR isoform Long and hybrid receptors composed of IGF1R and INSR isoform Short have similar binding characteristics, both bind IGF1 and have a low affinity for insulin. In adipocytes, inhibits lipolysis. This chain is Insulin receptor (INSR), found in Homo sapiens (Human).